Here is a 536-residue protein sequence, read N- to C-terminus: Keratin, type II cytoskeletal 4 (536 aa).

The tract at residues 1-145 (MISRQSSVRG…DPEIQKIRTA (145 aa)) is head. Arg-13 is modified (omega-N-methylarginine). Positions 146 to 181 (EREQIKTLNNKFASFIDKVRFLEQQNKVLETKWNLL) are coil 1A. The IF rod domain occupies 146-457 (EREQIKTLNN…KLLEGEECRM (312 aa)). Residues 182-200 (QQQTTTTSPRNLDPFFETY) are linker 1. Positions 201–293 (INALRKNLDT…LYEAELSQMQ (93 aa)) are coil 1B. The tract at residues 294 to 316 (THVSDTSVVLSMDNNRNLDLDGI) is linker 12. Residues 317–454 (IAEVRAQYEE…TYRKLLEGEE (138 aa)) are coil 2. The tract at residues 455–524 (CRMSGECKSA…TSSATITKRS (70 aa)) is tail. A disordered region spans residues 515–536 (TSSATITKRSPRTRQDPDGLQP). Residues 527–536 (TRQDPDGLQP) show a composition bias toward basic and acidic residues.

It belongs to the intermediate filament family. As to quaternary structure, heterotetramer of two type I and two type II keratins. keratin-4 is generally associated with keratin-13.

The protein is Keratin, type II cytoskeletal 4 of Rattus norvegicus (Rat).